The sequence spans 426 residues: Cdc25-like protein phosphatase twine (426 aa).

The tract at residues 1-27 (MASKRLMLDVEEEDDESGACGQENFDP) is disordered. The Rhodanese domain occupies 265–371 (SQGGYEIIDC…FFGLYSQLCQ (107 aa)). The active site involves cysteine 318.

The protein belongs to the MPI phosphatase family. Expressed in developing male and female germ cells.

It catalyses the reaction O-phospho-L-tyrosyl-[protein] + H2O = L-tyrosyl-[protein] + phosphate. Required during meiosis. Regulates the transition from the extended G2 phase to the onset of the first meiotic division. This Drosophila melanogaster (Fruit fly) protein is Cdc25-like protein phosphatase twine (twe).